The chain runs to 710 residues: Integrator complex subunit 10 (710 aa).

3 positions are modified to phosphoserine: Ser-231, Ser-381, and Ser-382. Lys-464 participates in a covalent cross-link: Glycyl lysine isopeptide (Lys-Gly) (interchain with G-Cter in SUMO2).

This sequence belongs to the Integrator subunit 10 family. In terms of assembly, component of the Integrator complex, composed of core subunits INTS1, INTS2, INTS3, INTS4, INTS5, INTS6, INTS7, INTS8, INTS9/RC74, INTS10, INTS11/CPSF3L, INTS12, INTS13, INTS14 and INTS15. The core complex associates with protein phosphatase 2A subunits PPP2CA and PPP2R1A, to form the Integrator-PP2A (INTAC) complex. INTS10 is part of the tail subcomplex, composed of INTS10, INTS13, INTS14 and INTS15.

The protein localises to the nucleus. Its function is as follows. Component of the integrator complex, a multiprotein complex that terminates RNA polymerase II (Pol II) transcription in the promoter-proximal region of genes. The integrator complex provides a quality checkpoint during transcription elongation by driving premature transcription termination of transcripts that are unfavorably configured for transcriptional elongation: the complex terminates transcription by (1) catalyzing dephosphorylation of the C-terminal domain (CTD) of Pol II subunit POLR2A/RPB1 and SUPT5H/SPT5, (2) degrading the exiting nascent RNA transcript via endonuclease activity and (3) promoting the release of Pol II from bound DNA. The integrator complex is also involved in terminating the synthesis of non-coding Pol II transcripts, such as enhancer RNAs (eRNAs), small nuclear RNAs (snRNAs), telomerase RNAs and long non-coding RNAs (lncRNAs). Within the integrator complex, INTS10 is part of the integrator tail module that acts as a platform for the recruitment of transcription factors at promoters. May be not involved in the recruitment of cytoplasmic dynein to the nuclear envelope, probably as component of the integrator complex. In Homo sapiens (Human), this protein is Integrator complex subunit 10.